The primary structure comprises 580 residues: Thymidine kinase (580 aa).

Disordered stretches follow at residues 1 to 60 and 133 to 157; these read MAEG…KSVK and VCGR…ASMG. Pro residues predominate over residues 137–149; the sequence is PPLPPPNHPPPAT. 260-267 serves as a coordination point for ATP; sequence GVMGVGKS. Glu-287 acts as the Proton acceptor in catalysis. Gln-325 is a binding site for substrate. Arg-415 is an ATP binding site. Arg-421 is a substrate binding site.

This sequence belongs to the herpesviridae thymidine kinase family. Homodimer.

It catalyses the reaction thymidine + ATP = dTMP + ADP + H(+). Catalyzes the transfer of the gamma-phospho group of ATP to thymidine to generate dTMP in the salvage pathway of pyrimidine synthesis. The dTMP serves as a substrate for DNA polymerase during viral DNA replication. Allows the virus to be reactivated and to grow in non-proliferative cells lacking a high concentration of phosphorylated nucleic acid precursors. The polypeptide is Thymidine kinase (Human herpesvirus 8 type P (isolate GK18) (HHV-8)).